A 68-amino-acid polypeptide reads, in one-letter code: uncharacterized protein (68 aa).

The signal sequence occupies residues 1 to 21; that stretch reads MELYREYPAWLIFLRRTYAVA.

This is an uncharacterized protein from Escherichia coli O157:H7.